The chain runs to 556 residues: Potassium-transporting ATPase potassium-binding subunit (556 aa).

Helical transmembrane passes span 5–25 (LAGILFLASLVIALVAVHVPL), 65–85 (SVLAFSAVSLLFLFILQLVQG), 133–153 (GLAVQNFVSAAVGMAVAIALV), 176–196 (IRILLPISVIAAILLITGGAI), 249–269 (PTTWTNWIEIFLLLVIAFSLP), 283–303 (YAIVGVQAVLAVISWSATLFF), 377–397 (AGLYGILILAVITVFVAGLMV), 415–435 (LAATYFLVTPLIVLTGTAVAM), 483–503 (ALGLAMVFGRFLPIILALALA), and 526–546 (FVGMVAGVTLILVALTFLPML).

It belongs to the KdpA family. As to quaternary structure, the system is composed of three essential subunits: KdpA, KdpB and KdpC.

Its subcellular location is the cell membrane. Its function is as follows. Part of the high-affinity ATP-driven potassium transport (or Kdp) system, which catalyzes the hydrolysis of ATP coupled with the electrogenic transport of potassium into the cytoplasm. This subunit binds the extracellular potassium ions and delivers the ions to the membrane domain of KdpB through an intramembrane tunnel. The chain is Potassium-transporting ATPase potassium-binding subunit from Mycolicibacterium vanbaalenii (strain DSM 7251 / JCM 13017 / BCRC 16820 / KCTC 9966 / NRRL B-24157 / PYR-1) (Mycobacterium vanbaalenii).